Here is a 104-residue protein sequence, read N- to C-terminus: Protein EPIDERMAL PATTERNING FACTOR 1 (104 aa).

The first 20 residues, Met-1–Ala-20, serve as a signal peptide directing secretion. Cystine bridges form between Cys-60–Cys-94, Cys-64–Cys-70, Cys-67–Cys-96, and Cys-79–Cys-88. An N-linked (GlcNAc...) asparagine glycan is attached at Asn-98.

This sequence belongs to the plant cysteine rich small secretory peptide family. Epidermal patterning factor subfamily. As to quaternary structure, interacts with ERECTA and ERL1, but not with TMM. In terms of tissue distribution, expressed in shoots, but not in roots. Mostly localized in developing leaves, specifically in meristemoids, guard mother cells (GMCs), and young guard cells.

It localises to the secreted. Controls stomatal patterning. Regulates asymmetric cell division during guard cell differentiation. Mediates stomatal development inhibition. Not cleaved by the protease CRSP (AC Q9LNU1). MEPF1: mobile signal controlling stomatal development in a non-cell-autonomous manner. Uses ERL1 as major receptor. May act by competing with somatogen (AC Q9SV72) for the same receptor, TMM (AC Q9SSD1). This Arabidopsis thaliana (Mouse-ear cress) protein is Protein EPIDERMAL PATTERNING FACTOR 1.